The chain runs to 156 residues: Tripartite terminase subunit 2 (156 aa).

Positions 1 to 37 (MYESENASEHHPELEDVFSENTGDSNPSMGSSDSTRS) are disordered. Positions 19–37 (SENTGDSNPSMGSSDSTRS) are enriched in polar residues.

This sequence belongs to the herpesviridae TRM2 protein family. Associates with TRM1 and TRM3 to form the tripartite terminase complex.

The protein resides in the host nucleus. Functionally, component of the molecular motor that translocates viral genomic DNA in empty capsid during DNA packaging. Forms a tripartite terminase complex together with TRM1 and TRM3 in the host cytoplasm. Once the complex reaches the host nucleus, it interacts with the capsid portal vertex. This portal forms a ring in which genomic DNA is translocated into the capsid. This Varicella-zoster virus (strain Dumas) (HHV-3) protein is Tripartite terminase subunit 2.